We begin with the raw amino-acid sequence, 740 residues long: Rho GTPase-activating protein 92B (740 aa).

One can recognise a BAR domain in the interval Glu-13 to Lys-246. The disordered stretch occupies residues Leu-49–Ser-74. The region spanning Thr-251 to Phe-448 is the Rho-GAP domain. A disordered region spans residues Gly-467–Asp-740. Phosphoserine occurs at positions 469 and 473. Residues Thr-506 to Ser-520 are compositionally biased toward polar residues. Residues Pro-566–Pro-577 are compositionally biased toward pro residues. At Ser-593 the chain carries Phosphoserine. At Thr-595 the chain carries Phosphothreonine. The span at Thr-643–Gly-655 shows a compositional bias: polar residues. The span at Phe-659 to Asn-672 shows a compositional bias: basic and acidic residues. Polar residues predominate over residues Gly-673–Lys-686. Positions Pro-694 to Pro-713 are enriched in low complexity. Position 715 is a phosphoserine (Ser-715). The residue at position 721 (Thr-721) is a Phosphothreonine. Residues Pro-725–Thr-734 are compositionally biased toward pro residues. Residues Ser-738 and Ser-739 each carry the phosphoserine modification.

GTPase activator for the Rho-type GTPases by converting them to an inactive GDP-bound state. This is Rho GTPase-activating protein 92B (RhoGAP92B) from Drosophila melanogaster (Fruit fly).